Reading from the N-terminus, the 123-residue chain is Thioredoxin H-type (123 aa).

In terms of domain architecture, Thioredoxin spans 2–119 (AATAELIPAG…IEAKLLKHSQ (118 aa)). A disulfide bond links C45 and C48.

It belongs to the thioredoxin family. Plant H-type subfamily.

Its subcellular location is the cytoplasm. Its function is as follows. Participates in various redox reactions through the reversible oxidation of the active center dithiol to a disulfide. The H form is known to activate a number of cytosolic enzymes. This Brassica campestris (Field mustard) protein is Thioredoxin H-type (PEC-2).